Reading from the N-terminus, the 103-residue chain is Large ribosomal subunit protein mL63 (103 aa).

This sequence belongs to the mitochondrion-specific ribosomal protein mL63 family.

It is found in the mitochondrion. The polypeptide is Large ribosomal subunit protein mL63 (mrpl57) (Danio rerio (Zebrafish)).